A 792-amino-acid chain; its full sequence is Pentatricopeptide repeat-containing protein At4g30700 (792 aa).

16 PPR repeats span residues 51–81 (DISLLTKLTQRLSDLGAIYYARDIFLSVQRP), 82–117 (DVFLFNVLMRGFSVNESPHSSLSVFAHLRKSTDLKP), 118–152 (NSSTYAFAISAASGFRDDRAGRVIHGQAVVDGCDS), 153–183 (ELLLGSNIVKMYFKFWRVEDARKVFDRMPEK), 184–218 (DTILWNTMISGYRKNEMYVESIQVFRDLINESCTR), 220–254 (DTTTLLDILPAVAELQELRLGMQIHSLATKTGCYS), 255–285 (HDYVLTGFISLYSKCGKIKMGSALFREFRKP), 286–320 (DIVAYNAMIHGYTSNGETELSLSLFKELMLSGARL), 321–352 (RSSTLVSLVPVSGHLMLIYAIHGYCLKSNFLS), 353–383 (HASVSTALTTVYSKLNEIESARKLFDESPEK), 384–418 (SLPSWNAMISGYTQNGLTEDAISLFREMQKSEFSP), 419–453 (NPVTITCILSACAQLGALSLGKWVHDLVRSTDFES), 454–484 (SIYVSTALIGMYAKCGSIAEARRLFDLMTKK), 485–519 (NEVTWNTMISGYGLHGQGQEALNIFYEMLNSGITP), 520–555 (TPVTFLCVLYACSHAGLVKEGDEIFNSMIHRYGFEP), and 556–586 (SVKHYACMVDILGRAGHLQRALQFIEAMSIE). A type E motif region spans residues 591–666 (VWETLLGACR…APGYTLIEIG (76 aa)). A type E(+) motif region spans residues 667–697 (ETPHVFTSGDQSHPQVKEIYEKLEKLEGKMR). Positions 698–792 (EAGYQPETEL…DGVCSCGDYW (95 aa)) are type DYW motif.

The protein belongs to the PPR family. PCMP-H subfamily.

The protein is Pentatricopeptide repeat-containing protein At4g30700 (DYW9) of Arabidopsis thaliana (Mouse-ear cress).